We begin with the raw amino-acid sequence, 602 residues long: Sodium- and chloride-dependent GABA transporter 2 (602 aa).

Topologically, residues 1–40 are cytoplasmic; it reads MENRASGTTSNGETKPVCPAMEKVEEDGTLEREHWNNKME. A run of 3 helical transmembrane segments spans residues 41-61, 68-88, and 121-141; these read FVLS…FPYL, GAFF…VFFL, and IVSL…FYLF. The Extracellular segment spans residues 142–206; that stretch reads SSFTTDLPWG…GIQHLGSLRW (65 aa). An intrachain disulfide couples Cys153 to Cys162. 3 N-linked (GlcNAc...) asparagine glycosylation sites follow: Asn169, Asn173, and Asn178. The next 2 helical transmembrane spans lie at 207 to 227 and 233 to 253; these read ELVL…WKGV and VVYF…IRGV. Residue Asn269 is glycosylated (N-linked (GlcNAc...) asparagine). Helical transmembrane passes span 282 to 302, 319 to 339, 366 to 386, 418 to 438, 453 to 473, 490 to 510, and 528 to 548; these read AGTQ…ALGS, ILNS…LGFM, VVML…VVLL, VLIL…LTEG, GMCL…VYGA, PLIK…TFLF, and WWGD…IPAW. At 549 to 602 the chain is on the cytoplasmic side; that stretch reads SIYKLRTLKGPLRERLRQLVCPAEDLPQKNQPEPTAPATPMTSLLRLTELESNC. Thr587 is modified (phosphothreonine). At Ser591 the chain carries Phosphoserine.

The protein belongs to the sodium:neurotransmitter symporter (SNF) (TC 2.A.22) family. SLC6A13 subfamily. In terms of tissue distribution, expressed at high levels in liver, followed by kidney and leptomeninges, and very low levels in the cerebellum (at protein level). In the brain, detected in some blood vessels (at protein level). In the kidney, expressed in the cortex, including parts of the proximal tubules, but not in the medulla (at protein level). In the liver, highest expression in periportal hepatocytes, with highest density at the vascular side (at protein level). Also detected at low levels in other organs, including skeletal muscle.

It is found in the cell membrane. The protein resides in the basolateral cell membrane. It catalyses the reaction 4-aminobutanoate(out) + chloride(out) + 2 Na(+)(out) = 4-aminobutanoate(in) + chloride(in) + 2 Na(+)(in). It carries out the reaction taurine(out) + chloride(out) + 2 Na(+)(out) = taurine(in) + chloride(in) + 2 Na(+)(in). The catalysed reaction is beta-alanine(out) + chloride(out) + 2 Na(+)(out) = beta-alanine(in) + chloride(in) + 2 Na(+)(in). The enzyme catalyses hypotaurine(out) + chloride(out) + 2 Na(+)(out) = hypotaurine(in) + chloride(in) + 2 Na(+)(in). Its activity is regulated as follows. Gamma-aminobutyric acid (GABA) transport is inhibited by beta-alanine, taurine, hypotaurine, beta-guanidinopropionic acid, 2,3-diaminopropionic acid, guvacine and nipecotic acid. Beta-alanine transport is inhibited by GABA. Taurine transport is inhibited by GABA, beta-alanine, SNAP-5114, nigericin, nipecotic acid and ouabain. In terms of biological role, mediates sodium- and chloride-dependent transport of gamma-aminobutyric acid (GABA). Can also mediate transport of beta-alanine, taurine and hypotaurine and is the major taurine transporter in hepatocytes. This chain is Sodium- and chloride-dependent GABA transporter 2 (Slc6a13), found in Mus musculus (Mouse).